Here is a 652-residue protein sequence, read N- to C-terminus: Iron-regulated outer membrane virulence protein (652 aa).

An N-terminal signal peptide occupies residues 1–25 (MSRFNPSPVSLSVTLGLMFSASAFA). A TonB box motif is present at residues 33–40 (ETMVVTAA). The region spanning 45–162 (VIQNAPASIS…IGGVINIITR (118 aa)) is the TBDR plug domain. Residues 167 to 652 (QWSGNVQLST…RYWLGLDIAF (486 aa)) form the TBDR beta-barrel domain. The TonB C-terminal box signature appears at 635–652 (YGYVEDGRRYWLGLDIAF).

This sequence belongs to the TonB-dependent receptor family.

Its subcellular location is the cell outer membrane. In terms of biological role, involved in the initial step of iron uptake by binding ferric vibriobactin, an iron chelatin siderophore that allows V.cholerae to extract iron from the environment. The chain is Iron-regulated outer membrane virulence protein (irgA) from Vibrio cholerae serotype O1 (strain ATCC 39541 / Classical Ogawa 395 / O395).